Consider the following 305-residue polypeptide: Coenzyme PQQ synthesis protein B (305 aa).

The protein belongs to the PqqB family.

It functions in the pathway cofactor biosynthesis; pyrroloquinoline quinone biosynthesis. May be involved in the transport of PQQ or its precursor to the periplasm. The sequence is that of Coenzyme PQQ synthesis protein B from Methylobacillus flagellatus.